A 416-amino-acid polypeptide reads, in one-letter code: Probable 26S proteasome regulatory subunit rpn-6.2 (416 aa).

Residues 217–386 enclose the PCI domain; that stretch reads YKTSFSYFYE…DTVVVYPKAD (170 aa).

This sequence belongs to the proteasome subunit S9 family. As to quaternary structure, component of the lid subcomplex of the 19S proteasome regulatory particle complex (also named PA700 complex). The 26S proteasome consists of a 20S proteasome core and two 19S regulatory subunits.

In terms of biological role, component of the lid subcomplex of the 26S proteasome, a multiprotein complex involved in the ATP-dependent degradation of ubiquitinated proteins. In the complex, rpn-6.2 is required for proteasome assembly. This is Probable 26S proteasome regulatory subunit rpn-6.2 (rpn-6.2) from Caenorhabditis elegans.